Here is a 204-residue protein sequence, read N- to C-terminus: Methylthioribulose-1-phosphate dehydratase (204 aa).

His-94 and His-96 together coordinate Zn(2+).

It belongs to the aldolase class II family. MtnB subfamily. Requires Zn(2+) as cofactor.

It carries out the reaction 5-(methylsulfanyl)-D-ribulose 1-phosphate = 5-methylsulfanyl-2,3-dioxopentyl phosphate + H2O. The protein operates within amino-acid biosynthesis; L-methionine biosynthesis via salvage pathway; L-methionine from S-methyl-5-thio-alpha-D-ribose 1-phosphate: step 2/6. Functionally, catalyzes the dehydration of methylthioribulose-1-phosphate (MTRu-1-P) into 2,3-diketo-5-methylthiopentyl-1-phosphate (DK-MTP-1-P). The polypeptide is Methylthioribulose-1-phosphate dehydratase (Enterobacter sp. (strain 638)).